Reading from the N-terminus, the 374-residue chain is Isocitrate dehydrogenase [NAD] catalytic subunit 6, mitochondrial (374 aa).

Residues 1–44 (MTMTAFLARRLIGNGSSQILGTSSSSSGPFISVSRAFFSSSTPI) constitute a mitochondrion transit peptide. Residues Arg-127, Arg-137, Arg-158, and Asp-245 each contribute to the substrate site. Residues Asp-245, Asp-269, and Asp-273 each contribute to the Mg(2+) site.

This sequence belongs to the isocitrate and isopropylmalate dehydrogenases family. Heterooligomer of catalytic and regulatory subunits. The cofactor is Mg(2+). Mn(2+) is required as a cofactor. Ubiquitous. Predominantly expressed in leaves.

Its subcellular location is the mitochondrion. The catalysed reaction is D-threo-isocitrate + NAD(+) = 2-oxoglutarate + CO2 + NADH. In terms of biological role, catalytic subunit of the NAD(+)-dependent isocitrate dehydrogenase involved in the oxidative decarboxylation of isocitrate to 2-oxoglutarate. Performs an essential role in the oxidative function of the citric acid cycle. This chain is Isocitrate dehydrogenase [NAD] catalytic subunit 6, mitochondrial (IDH6), found in Arabidopsis thaliana (Mouse-ear cress).